The primary structure comprises 236 residues: Small ribosomal subunit protein uS2c (236 aa).

This sequence belongs to the universal ribosomal protein uS2 family.

The protein resides in the plastid. It is found in the chloroplast. This chain is Small ribosomal subunit protein uS2c (rps2), found in Morus indica (Mulberry).